Here is a 237-residue protein sequence, read N- to C-terminus: Riboflavin kinase (237 aa).

A unknown region spans residues 1–101 (MRLKIKAIWV…SRIFSSEPDV (101 aa)). Positions 102–237 (LELEGNVLKG…VKKQGMEGQK (136 aa)) are riboflavin kinase. CDP is bound at residue 111–116 (GLGEGQ). Thr140 and Asn142 together coordinate Mg(2+). FMN-binding residues include Thr197 and Glu205. A CDP-binding site is contributed by 210–213 (VKLR).

The protein belongs to the archaeal riboflavin kinase family. Requires Mg(2+) as cofactor.

It carries out the reaction riboflavin + CTP = CDP + FMN + H(+). Its pathway is cofactor biosynthesis; FMN biosynthesis; FMN from riboflavin (CTP route): step 1/1. In terms of biological role, catalyzes the CTP-dependent phosphorylation of riboflavin (vitamin B2) to form flavin mononucleotide (FMN). The chain is Riboflavin kinase (ribK) from Methanosarcina acetivorans (strain ATCC 35395 / DSM 2834 / JCM 12185 / C2A).